A 510-amino-acid chain; its full sequence is MIWHVQNENFILDSTRIFMKAFHLLLFQGSFIFPECILIFGLILLLMIDLTSDQKDRPWFYFISSTSLVISITALLFRWREEPIISFSGNFQTNNFNEIFQFLILLCSTLCIPLSVEYIECTEMAITEFLLFVLTATLGGMFLCGANDLITIFVALECFSLCSYLLSGYTKRDLRSNEATMKYLLMGGASSSILVYGFSWLYGLSGGEIELQEIVNGLINTQMYNSPGISIALIFITVGLGFKLSLAPFHQWTPDVYEGSPTPVVAFLSVTSKVAALALATRILDIPFYFSSNEWHLLLEILAILSMILGNLLAITQTSMKRMLAYSSIGQIGYVIIGIIVGDSNDGYASMITYMLFYISMNLGTFACIVLFGLRTGTDNIRDYAGLYTKDPFLALSLALCLLSLGGLPPLAGFFGKLYLFWCGWQAGLYFLVSIGLLTSVLSIYYYLKIVKLLMTGRNQEITPYVRNYRRSPLRSNNSIELSMTVCVIASTILGISMNPILAIAQDTLF.

14 helical membrane passes run 31-51, 59-79, 99-119, 124-144, 149-169, 184-204, 229-249, 261-281, 295-315, 323-343, 354-374, 395-415, 418-438, and 484-504; these read FIFPECILIFGLILLLMIDLT, WFYFISSTSLVISITALLFRW, IFQFLILLCSTLCIPLSVEYI, MAITEFLLFVLTATLGGMFLC, LITIFVALECFSLCSYLLSGY, LLMGGASSSILVYGFSWLYGL, ISIALIFITVGLGFKLSLAPF, PTPVVAFLSVTSKVAALALAT, WHLLLEILAILSMILGNLLAI, MLAYSSIGQIGYVIIGIIVGD, YMLFYISMNLGTFACIVLFGL, ALSLALCLLSLGGLPPLAGFF, LYLFWCGWQAGLYFLVSIGLL, and MTVCVIASTILGISMNPILAI.

The protein belongs to the complex I subunit 2 family. NDH is composed of at least 16 different subunits, 5 of which are encoded in the nucleus.

It is found in the plastid. It localises to the chloroplast thylakoid membrane. It catalyses the reaction a plastoquinone + NADH + (n+1) H(+)(in) = a plastoquinol + NAD(+) + n H(+)(out). The enzyme catalyses a plastoquinone + NADPH + (n+1) H(+)(in) = a plastoquinol + NADP(+) + n H(+)(out). Functionally, NDH shuttles electrons from NAD(P)H:plastoquinone, via FMN and iron-sulfur (Fe-S) centers, to quinones in the photosynthetic chain and possibly in a chloroplast respiratory chain. The immediate electron acceptor for the enzyme in this species is believed to be plastoquinone. Couples the redox reaction to proton translocation, and thus conserves the redox energy in a proton gradient. The sequence is that of NAD(P)H-quinone oxidoreductase subunit 2 A, chloroplastic from Oryza sativa subsp. japonica (Rice).